Consider the following 555-residue polypeptide: Small ribosomal subunit protein uS3m (555 aa).

The segment at 1-20 is disordered; sequence MARKGNPISVRLGKNRSSDS.

This sequence belongs to the universal ribosomal protein uS3 family.

It localises to the mitochondrion. The protein is Small ribosomal subunit protein uS3m (RPS3) of Brassica napus (Rape).